We begin with the raw amino-acid sequence, 204 residues long: Large ribosomal subunit protein bL25 (204 aa).

Belongs to the bacterial ribosomal protein bL25 family. CTC subfamily. As to quaternary structure, part of the 50S ribosomal subunit; part of the 5S rRNA/L5/L18/L25 subcomplex. Contacts the 5S rRNA. Binds to the 5S rRNA independently of L5 and L18.

Functionally, this is one of the proteins that binds to the 5S RNA in the ribosome where it forms part of the central protuberance. In Pseudoalteromonas translucida (strain TAC 125), this protein is Large ribosomal subunit protein bL25.